A 144-amino-acid polypeptide reads, in one-letter code: Large ribosomal subunit protein uL14 (144 aa).

The disordered stretch occupies residues 107–144 (NEGYTHSQHSNQREGGERIQAQPSPPHARRAVKTSFCR).

Belongs to the universal ribosomal protein uL14 family. Part of the 50S ribosomal subunit. Forms a cluster with proteins L3 and L19. In the 70S ribosome, L14 and L19 interact and together make contacts with the 16S rRNA in bridges B5 and B8.

Functionally, binds to 23S rRNA. Forms part of two intersubunit bridges in the 70S ribosome. In Xanthobacter autotrophicus (strain ATCC BAA-1158 / Py2), this protein is Large ribosomal subunit protein uL14.